A 220-amino-acid polypeptide reads, in one-letter code: Dual specificity phosphatase 29 (220 aa).

One can recognise a Tyrosine-protein phosphatase domain in the interval 54-202 (HVNEVWPKLY…LRELDKQLVQ (149 aa)). Substrate is bound at residue 146–153 (HCVMGRSR). The active-site Phosphocysteine intermediate is the Cys147.

Belongs to the protein-tyrosine phosphatase family. Non-receptor class dual specificity subfamily. As to quaternary structure, homodimer. Interacts with PRKAA2.

It localises to the cytoplasm. It is found in the nucleus. It carries out the reaction O-phospho-L-tyrosyl-[protein] + H2O = L-tyrosyl-[protein] + phosphate. It catalyses the reaction O-phospho-L-seryl-[protein] + H2O = L-seryl-[protein] + phosphate. The catalysed reaction is O-phospho-L-threonyl-[protein] + H2O = L-threonyl-[protein] + phosphate. Functionally, dual specificity phosphatase able to dephosphorylate phosphotyrosine, phosphoserine and phosphothreonine residues within the same substrate, with a preference for phosphotyrosine as a substrate. Involved in the modulation of intracellular signaling cascades. In skeletal muscle regulates systemic glucose homeostasis by activating, AMPK, an energy sensor protein kinase. Affects MAP kinase signaling though modulation of the ERK1/2 cascade in skeletal muscle promoting muscle cell differentiation, development and atrophy. The polypeptide is Dual specificity phosphatase 29 (DUSP29) (Pan troglodytes (Chimpanzee)).